A 304-amino-acid polypeptide reads, in one-letter code: Transmembrane protein 178A (304 aa).

An N-terminal signal peptide occupies residues 1–25 (MESRGLVTAVSLTLSICSLLLLVTA). The Extracellular segment spans residues 26–186 (IFTDHWYETD…LLHLRRITAG (161 aa)). Asparagine 165 is a glycosylation site (N-linked (GlcNAc...) asparagine). Residues 187–207 (FLGMAAAVLLCGCIVAAISFF) traverse the membrane as a helical segment. The Cytoplasmic portion of the chain corresponds to 208–215 (WEESLTQH). Residues 216-236 (VAGLLFLMTGIFCTISLCTYA) form a helical membrane-spanning segment. The Extracellular portion of the chain corresponds to 237-267 (ASVAYELNRQPKFIYGLPSDVEHGYSWSLFC). A helical membrane pass occupies residues 268–288 (AWCSLGLIVAAGCLCTAYPFI). The Cytoplasmic portion of the chain corresponds to 289–304 (SRTKILHLKFARDSCV).

It belongs to the TMEM178 family.

Its subcellular location is the endoplasmic reticulum membrane. May act as a negative regulator of osteoclast differentiation. This is Transmembrane protein 178A (tmem178a) from Xenopus laevis (African clawed frog).